A 65-amino-acid polypeptide reads, in one-letter code: Small ribosomal subunit protein bS21 (65 aa).

Residues 43 to 65 (VDDRLKRARSKRRAQRANEESNA) form a disordered region. Basic residues predominate over residues 48 to 57 (KRARSKRRAQ).

The protein belongs to the bacterial ribosomal protein bS21 family.

This is Small ribosomal subunit protein bS21 from Chloroherpeton thalassium (strain ATCC 35110 / GB-78).